Consider the following 275-residue polypeptide: Lincomycin biosynthesis protein LmbN (275 aa).

The Carrier domain maps to 1-78 (MSTLDEVLAL…AIAATVARIT (78 aa)). Ser-37 bears the O-(pantetheine 4'-phosphoryl)serine mark. The SIS domain maps to 113–275 (LFDTWHAGGT…HHALCVAHAP (163 aa)).

It functions in the pathway antibiotic biosynthesis; lincomycin biosynthesis. The chain is Lincomycin biosynthesis protein LmbN (lmbN) from Streptomyces lincolnensis.